The primary structure comprises 336 residues: TBC1 domain family member 21 (336 aa).

Residues 57-265 (GLHPFVRTEA…RLWEVLLTGK (209 aa)) enclose the Rab-GAP TBC domain.

Interacts with ACTB. Interacts with ARMC12, TOMM20, DNAH7 and RAP1A. Interacts with RAB10. In terms of tissue distribution, expressed in round and elongated spermatids (at protein level). Expressed specifically in adult testis and very weakly in fetal brain.

The protein localises to the cytoplasmic vesicle. The protein resides in the secretory vesicle. Its subcellular location is the acrosome. It localises to the cytoplasm. It is found in the cytoskeleton. Acts as a GTPase-activating protein for Rab family protein(s). Essential for the establishment of male fertility, and is required for both the production of normal sperm number and sperm function. Plays an important role in the formation of intact mitochondria, outer dense fibers and axoneme within the sperm tail. Essential for sperm mitochondrial sheath formation and for the interactions of ARMC12 with VDAC2 and VDAC3. May be involved in acrosome formation and cytoskeletal reorganization during spermiogenesis, possibly by regulating RAB3A activity. The protein is TBC1 domain family member 21 (TBC1D21) of Homo sapiens (Human).